The sequence spans 304 residues: tRNA pseudouridine synthase B (304 aa).

The Nucleophile role is filled by Asp-47. Residues 85–105 (TNTDDGEGEVTETSDARPSDD) are disordered.

The protein belongs to the pseudouridine synthase TruB family. Type 1 subfamily.

The enzyme catalyses uridine(55) in tRNA = pseudouridine(55) in tRNA. Functionally, responsible for synthesis of pseudouridine from uracil-55 in the psi GC loop of transfer RNAs. The chain is tRNA pseudouridine synthase B from Dinoroseobacter shibae (strain DSM 16493 / NCIMB 14021 / DFL 12).